Here is a 354-residue protein sequence, read N- to C-terminus: Selenide, water dikinase (354 aa).

Cys-23 is a catalytic residue. ATP contacts are provided by residues Lys-26 and 54-56 (TSD). Asp-57 lines the Mg(2+) pocket. ATP contacts are provided by residues Asp-74, Asp-97, and 145 to 147 (GHS). Asp-97 contacts Mg(2+). Asp-233 is a binding site for Mg(2+).

This sequence belongs to the selenophosphate synthase 1 family. Class I subfamily. In terms of assembly, homodimer. The cofactor is Mg(2+).

The enzyme catalyses hydrogenselenide + ATP + H2O = selenophosphate + AMP + phosphate + 2 H(+). Synthesizes selenophosphate from selenide and ATP. This Burkholderia pseudomallei (strain K96243) protein is Selenide, water dikinase.